Reading from the N-terminus, the 600-residue chain is MEKGTDRMAAAAPAPPAAASQCRSPRCTAERRGVRRELDSWRHRLMHCVGFESILEGLYGPRLRRDLSLFEDCEPEELTDWSMDEKCSFCNLHKETVSDRASVIGSSQSTPTEELSSQGQSNTDKIECQAENYLNALFRKKDLPQNCDPNIPLVAQELMKKMIRQFAIEYISKSSKIQENRNGSSFEPSLICKSIQMNQTENSLQEEQDSPLDLTVNRTQEQNTQQGDGVLDLSTKKSARLEEPKYDPLCSENSVSGRLHRHREDYVERSAEFADGLLSKALKDIQSGALDINKAGILYGIPQKTLLLHLEALPAGKPAPFKNKTRDFNDSYSFKDSKETCAVLQKVALWARAQAERTEKSKLSLLETSELKFPTASSYLHQLTLQRMVTQFKEKSENLQYETTNPTVQLKIPQLRISSVSKPQSDTAGLLDVMYHVSKTSSVLEGSALQKLKNILPKQNKIECSGPVTHSSVDSYFLHGDLSPLCLNAKNGTVDGTSENTEDSLDRKDNKQPRKKRGRYRQYDHEIMEEAIAMVMSGKMSVSKAQGIYGVPHSTLEYKVKERSGTLKTPPKKKLRLPDTGLFNMTDSGTGSCKTSSKPV.

3 disordered regions span residues 1–24, 102–122, and 495–519; these read MEKG…QCRS, SVIG…GQSN, and DGTS…KRGR. Residues 104–122 show a composition bias toward polar residues; it reads IGSSQSTPTEELSSQGQSN. Residues 514–566 form the HTH psq-type domain; that stretch reads RKKRGRYRQYDHEIMEEAIAMVMSGKMSVSKAQGIYGVPHSTLEYKVKERSGT. The H-T-H motif DNA-binding region spans 542 to 562; the sequence is VSKAQGIYGVPHSTLEYKVKE. A disordered region spans residues 581 to 600; the sequence is GLFNMTDSGTGSCKTSSKPV. A compositionally biased stretch (polar residues) spans 583 to 600; it reads FNMTDSGTGSCKTSSKPV.

It localises to the nucleus. May act as transcription activator that binds DNA elements with the sequence 5'-CCCTATCGATCGATCTCTACCT-3'. The chain is Ligand-dependent nuclear receptor corepressor-like protein (LCORL) from Gallus gallus (Chicken).